Consider the following 72-residue polypeptide: NAD(P)H-quinone oxidoreductase subunit O (72 aa).

The protein belongs to the complex I NdhO subunit family. NDH-1 can be composed of about 15 different subunits; different subcomplexes with different compositions have been identified which probably have different functions.

The protein localises to the cellular thylakoid membrane. It carries out the reaction a plastoquinone + NADH + (n+1) H(+)(in) = a plastoquinol + NAD(+) + n H(+)(out). The enzyme catalyses a plastoquinone + NADPH + (n+1) H(+)(in) = a plastoquinol + NADP(+) + n H(+)(out). Functionally, NDH-1 shuttles electrons from an unknown electron donor, via FMN and iron-sulfur (Fe-S) centers, to quinones in the respiratory and/or the photosynthetic chain. The immediate electron acceptor for the enzyme in this species is believed to be plastoquinone. Couples the redox reaction to proton translocation, and thus conserves the redox energy in a proton gradient. Cyanobacterial NDH-1 also plays a role in inorganic carbon-concentration. The sequence is that of NAD(P)H-quinone oxidoreductase subunit O from Gloeothece citriformis (strain PCC 7424) (Cyanothece sp. (strain PCC 7424)).